Consider the following 187-residue polypeptide: MVRPLNCIVAVSQNMGIGKNGDFPWPMLRNEFKYFQRMTTTSSVEGKQNLVIMGRKTWFSIPEKNRPLKDRINIVLSRELKEPPQGAHFLAKSLDDALKLIEQPELADKVDMVWIVGGSSVYKEAMNQPGHLRLFVTRIMQEFESDTFFPEIDLEKYKLLPEYPGVLSEVQEEKGIKYKFEVYEKKG.

The 182-residue stretch at 4-185 (PLNCIVAVSQ…IKYKFEVYEK (182 aa)) folds into the DHFR domain. Residues 8 to 37 (IVAVSQNMGIGKNGDFPWPMLRNEFKYFQR) are involved in methotrexate binding. Residues Ala10 and 16–22 (GIGKNGD) contribute to the NADP(+) site. Position 31 to 36 (31 to 36 (EFKYFQ)) interacts with substrate. Lys33 carries the post-translational modification N6-acetyllysine; alternate. Lys33 carries the post-translational modification N6-succinyllysine; alternate. An NADP(+)-binding site is contributed by 55–57 (RKT). Residues 60 to 70 (SIPEKNRPLKD) form an involved in methotrexate binding region. Arg71 contributes to the substrate binding site. NADP(+) contacts are provided by residues 77–79 (SRE) and 117–124 (GGSSVYKE). Thr137 contacts methotrexate.

Belongs to the dihydrofolate reductase family. Homodimer.

It is found in the mitochondrion. The protein localises to the cytoplasm. It catalyses the reaction (6S)-5,6,7,8-tetrahydrofolate + NADP(+) = 7,8-dihydrofolate + NADPH + H(+). It participates in cofactor biosynthesis; tetrahydrofolate biosynthesis; 5,6,7,8-tetrahydrofolate from 7,8-dihydrofolate: step 1/1. In terms of biological role, key enzyme in folate metabolism. Contributes to the de novo mitochondrial thymidylate biosynthesis pathway. Catalyzes an essential reaction for de novo glycine and purine synthesis, and for DNA precursor synthesis. Binds its own mRNA. The protein is Dihydrofolate reductase (DHFR) of Mesocricetus auratus (Golden hamster).